We begin with the raw amino-acid sequence, 523 residues long: Cytochrome P450 52A3-A (523 aa).

The helical transmembrane segment at 17 to 34 (WYTILFGAAVTYFLSIAL) threads the bilayer. C471 contacts heme.

It belongs to the cytochrome P450 family. Requires heme as cofactor.

Its subcellular location is the membrane. Its function is as follows. Together with an NADPH cytochrome P450 the enzyme system catalyzes the terminal hydroxylation as the first step in the assimilation of alkanes and fatty acids. This is Cytochrome P450 52A3-A (CYP52A3-A) from Candida maltosa (Yeast).